Consider the following 427-residue polypeptide: CD209 antigen (427 aa).

The Cytoplasmic segment spans residues 1–37; it reads MSDSKEPRLQQLGLLEEEQLRGLGFRQTRGYKSLAGC. Short sequence motifs (endocytosis signal) lie at residues 14 to 15, 16 to 18, and 31 to 34; these read LL, EEE, and YKSL. The chain crosses the membrane as a helical; Signal-anchor for type II membrane protein span at residues 38 to 58; the sequence is LGHGPLVLQLLSFTLLAALLV. At 59–427 the chain is on the extracellular side; sequence QVSKVPSSIS…ASATPNPPPE (369 aa). N80 carries an N-linked (GlcNAc...) asparagine glycan. A run of 8 repeats spans residues 96-118, 119-141, 142-164, 165-187, 188-210, 211-233, 234-256, and 257-280. The segment at 96–280 is 8 X approximate tandem repeats; it reads KLQEIYQELT…AVERLCRRCP (185 aa). 3 cysteine pairs are disulfide-bonded: C279-C290, C307-C400, and C379-C392. A C-type lectin domain is found at 286 to 401; that stretch reads FQGNCYFMSN…CNLAKFWICK (116 aa). The Ca(2+) site is built by E370, N372, V374, E377, N388, and D389.

As to quaternary structure, homotetramer. Interacts with C1QBP; the interaction is indicative for a C1q:C1QBP:CD209 signaling complex. Interacts with ICAM2 and ICAM3 by binding to mannose-like carbohydrates. Interacts (via C-type lectin domain) with CEACAM1 (via Lewis X moieties); this interaction is regulated by the glycosylation pattern of CEACAM1 on cell types and regulates contact between dendritic cells and neutrophils.

Its subcellular location is the membrane. Functionally, pathogen-recognition receptor expressed on the surface of immature dendritic cells (DCs) and involved in initiation of primary immune response. Thought to mediate the endocytosis of pathogens which are subsequently degraded in lysosomal compartments. The receptor returns to the cell membrane surface and the pathogen-derived antigens are presented to resting T-cells via MHC class II proteins to initiate the adaptive immune response. Probably recognizes in a calcium-dependent manner high mannose N-linked oligosaccharides in a variety of pathogen antigens. On DCs it is a high affinity receptor for ICAM2 and ICAM3 by binding to mannose-like carbohydrates. May act as a DC rolling receptor that mediates transendothelial migration of DC presursors from blood to tissues by binding endothelial ICAM2. Seems to regulate DC-induced T-cell proliferation by binding to ICAM3 on T-cells in the immunological synapse formed between DC and T-cells. This is CD209 antigen (CD209) from Gorilla gorilla gorilla (Western lowland gorilla).